The primary structure comprises 825 residues: NT-3 growth factor receptor (825 aa).

Positions 1-31 are cleaved as a signal peptide; it reads MDVSLCPAKCSFWRIFLLGSVWLDYVGSVLA. Intrachain disulfides connect Cys32/Cys38 and Cys36/Cys45. Residues 32 to 429 lie on the Extracellular side of the membrane; it reads CPANCVCSKT…TVTHKPEEDT (398 aa). Asn68, Asn72, and Asn79 each carry an N-linked (GlcNAc...) asparagine glycan. LRR repeat units lie at residues 104–125 and 128–149; these read GLQK…AFAK and HLRY…LFQT. Residues Asn133 and Asn163 are each glycosylated (N-linked (GlcNAc...) asparagine). Residues 160-209 enclose the LRRCT domain; sequence NFFNCSCDIRWMQLWQEQGEAKLNNQNLYCINADGSQLPLFRMNISQCDL. Disulfide bonds link Cys164-Cys189 and Cys166-Cys207. 7 N-linked (GlcNAc...) asparagine glycosylation sites follow: Asn203, Asn218, Asn232, Asn259, Asn267, Asn272, and Asn294. 2 Ig-like C2-type domains span residues 210–300 and 309–382; these read PEIS…VALT and SLEE…IAKN. A disulfide bridge connects residues Cys231 and Cys284. A disulfide bridge links Cys320 with Cys362. 2 N-linked (GlcNAc...) asparagine glycosylation sites follow: Asn375 and Asn388. A helical membrane pass occupies residues 430-453; the sequence is FGVSIAVGLAAFACVLLVVLFIMI. The Cytoplasmic segment spans residues 454–825; the sequence is NKYGRRSKFG…ATPIYLDILG (372 aa). The residue at position 493 (Ser493) is a Phosphoserine. Position 516 is a phosphotyrosine; by autocatalysis (Tyr516). A Protein kinase domain is found at 538–825; it reads IVLKRELGEG…ATPIYLDILG (288 aa). ATP-binding positions include 544–552 and Lys572; that span reads LGEGAFGKV. Asp679 serves as the catalytic Proton acceptor. Tyr705, Tyr709, and Tyr710 each carry phosphotyrosine; by autocatalysis.

This sequence belongs to the protein kinase superfamily. Tyr protein kinase family. Insulin receptor subfamily. As to quaternary structure, exists in a dynamic equilibrium between monomeric (low affinity) and dimeric (high affinity) structures. Binds SH2B2. Interacts with SQSTM1 and KIDINS220. Interacts with PTPRS. Interacts with MAPK8IP3/JIP3. Post-translationally, ligand-mediated auto-phosphorylation.

The protein resides in the membrane. It catalyses the reaction L-tyrosyl-[protein] + ATP = O-phospho-L-tyrosyl-[protein] + ADP + H(+). Receptor tyrosine kinase involved in nervous system and probably heart development. Upon binding of its ligand NTF3/neurotrophin-3, NTRK3 autophosphorylates and activates different signaling pathways, including the phosphatidylinositol 3-kinase/AKT and the MAPK pathways, that control cell survival and differentiation. The chain is NT-3 growth factor receptor (NTRK3) from Macaca fascicularis (Crab-eating macaque).